A 376-amino-acid chain; its full sequence is Copper-containing nitrite reductase (376 aa).

Positions Met1–Gly33 form a signal peptide, tat-type signal. The residue at position 34 (Gln34) is a Pyrrolidone carboxylic acid. Plastocyanin-like domains are found at residues Gln34–Ile211 and Tyr212–Thr376. Positions 131, 136, 171, 172, 181, 186, and 342 each coordinate Cu cation.

Belongs to the multicopper oxidase family. Homotrimer. Requires Cu(2+) as cofactor. It depends on Cu(+) as a cofactor. The cofactor is FAD. In terms of processing, predicted to be exported by the Tat system. The position of the signal peptide cleavage has been experimentally proven.

It is found in the periplasm. The enzyme catalyses nitric oxide + Fe(III)-[cytochrome c] + H2O = Fe(II)-[cytochrome c] + nitrite + 2 H(+). It functions in the pathway nitrogen metabolism; nitrate reduction (denitrification); dinitrogen from nitrate: step 2/4. The chain is Copper-containing nitrite reductase (nirK) from Alcaligenes faecalis.